Reading from the N-terminus, the 124-residue chain is Small ribosomal subunit protein uS12 (124 aa).

The residue at position 89 (Asp-89) is a 3-methylthioaspartic acid.

Belongs to the universal ribosomal protein uS12 family. In terms of assembly, part of the 30S ribosomal subunit. Contacts proteins S8 and S17. May interact with IF1 in the 30S initiation complex.

With S4 and S5 plays an important role in translational accuracy. In terms of biological role, interacts with and stabilizes bases of the 16S rRNA that are involved in tRNA selection in the A site and with the mRNA backbone. Located at the interface of the 30S and 50S subunits, it traverses the body of the 30S subunit contacting proteins on the other side and probably holding the rRNA structure together. The combined cluster of proteins S8, S12 and S17 appears to hold together the shoulder and platform of the 30S subunit. This Shewanella oneidensis (strain ATCC 700550 / JCM 31522 / CIP 106686 / LMG 19005 / NCIMB 14063 / MR-1) protein is Small ribosomal subunit protein uS12.